We begin with the raw amino-acid sequence, 178 residues long: ATP-dependent protease subunit HslV (178 aa).

Residue threonine 7 is part of the active site. Na(+) is bound by residues glycine 162, cysteine 165, and threonine 168.

The protein belongs to the peptidase T1B family. HslV subfamily. In terms of assembly, a double ring-shaped homohexamer of HslV is capped on each side by a ring-shaped HslU homohexamer. The assembly of the HslU/HslV complex is dependent on binding of ATP.

The protein resides in the cytoplasm. It carries out the reaction ATP-dependent cleavage of peptide bonds with broad specificity.. Allosterically activated by HslU binding. Functionally, protease subunit of a proteasome-like degradation complex believed to be a general protein degrading machinery. The protein is ATP-dependent protease subunit HslV of Cupriavidus taiwanensis (strain DSM 17343 / BCRC 17206 / CCUG 44338 / CIP 107171 / LMG 19424 / R1) (Ralstonia taiwanensis (strain LMG 19424)).